A 528-amino-acid chain; its full sequence is Protein spinster homolog 1 (528 aa).

The tract at residues 1 to 38 is disordered; that stretch reads MAGSDTAPFLSQADDPDDGPAPGHPGLPGPMGNPKSGE. Ala2 carries the N-acetylalanine modification. A run of 12 helical transmembrane segments spans residues 60–80, 98–118, 126–146, 160–180, 187–207, 218–238, 278–298, 323–343, 357–377, 381–401, 421–441, and 465–485; these read LIVVVLCYINLLNYMDRFTVA, GLIQTVFISSYMVLAPVFGYL, YLMCGGIAFWSLVTLGSSFIP, VGVGEASYSTIAPTLIADLFV, MLSIFYFAIPVGSGLGYIAGS, WALRVTPGLGVLAVLLLFLVV, LGFTAVAFVTGSLALWAPAFL, LIFGLITCLTGVLGVGLGVEI, LVCAAGLLGSSPFLFLSLACA, IVATYIFIFIGETLLSMNWAI, FQIVLSHLLGDAGSPYLIGLI, and MLCAFVGALGGAAFLGTAMFI. Ser518 carries the phosphoserine modification.

The protein belongs to the major facilitator superfamily. Spinster (TC 2.A.1.49) family. As to quaternary structure, interacts with BCL2 and BCL2L1.

The protein resides in the lysosome membrane. It carries out the reaction a 1-acyl-sn-glycero-3-phosphocholine(out) + H(+)(out) = a 1-acyl-sn-glycero-3-phosphocholine(in) + H(+)(in). It catalyses the reaction 1-hexadecanoyl-sn-glycero-3-phosphocholine(out) + H(+)(out) = 1-hexadecanoyl-sn-glycero-3-phosphocholine(in) + H(+)(in). The enzyme catalyses 1-(9Z-octadecenoyl)-sn-glycero-3-phosphocholine(out) + H(+)(out) = 1-(9Z-octadecenoyl)-sn-glycero-3-phosphocholine(in) + H(+)(in). The catalysed reaction is 1-(5Z,8Z,11Z,14Z-eicosatetraenoyl)-sn-glycero-3-phosphocholine(out) + H(+)(out) = 1-(5Z,8Z,11Z,14Z-eicosatetraenoyl)-sn-glycero-3-phosphocholine(in) + H(+)(in). It carries out the reaction 1-(4Z,7Z,10Z,13Z,16Z,19Z-docosahexaenoyl)-sn-glycero-3-phosphocholine(out) + H(+)(out) = 1-(4Z,7Z,10Z,13Z,16Z,19Z-docosahexaenoyl)-sn-glycero-3-phosphocholine(in) + H(+)(in). It catalyses the reaction a 1-acyl-sn-glycero-3-phosphoethanolamine(out) + H(+)(out) = a 1-acyl-sn-glycero-3-phosphoethanolamine(in) + H(+)(in). The enzyme catalyses 1-(9Z-octadecenoyl)-sn-glycero-3-phosphoethanolamine(out) + H(+)(out) = 1-(9Z-octadecenoyl)-sn-glycero-3-phosphoethanolamine(in) + H(+)(in). The catalysed reaction is 1-acyl-sn-glycero-3-phospho-(1'-sn-glycerol)(out) + H(+)(out) = 1-acyl-sn-glycero-3-phospho-(1'-sn-glycerol)(in) + H(+)(in). It carries out the reaction 1-(9Z-octadecenoyl)-sn-glycero-3-phospho-(1'-sn-glycerol)(out) + H(+)(out) = 1-(9Z-octadecenoyl)-sn-glycero-3-phospho-(1'-sn-glycerol)(in) + H(+)(in). It catalyses the reaction a 1-O-(1Z-alkenyl)-sn-glycero-3-phosphocholine(out) + H(+)(out) = a 1-O-(1Z-alkenyl)-sn-glycero-3-phosphocholine(in) + H(+)(in). The enzyme catalyses 1-(1Z-hexadecenyl)-sn-glycero-3-phosphocholine(out) + H(+)(out) = 1-(1Z-hexadecenyl)-sn-glycero-3-phosphocholine(in) + H(+)(in). The catalysed reaction is a 1-O-(1Z-alkenyl)-sn-glycero-3-phosphoethanolamine(out) + H(+)(out) = a 1-O-(1Z-alkenyl)-sn-glycero-3-phosphoethanolamine(in) + H(+)(in). It carries out the reaction 1-O-(1Z-hexadecenyl)-sn-glycero-3-phosphoethanolamine(out) + H(+)(out) = 1-O-(1Z-hexadecenyl)-sn-glycero-3-phosphoethanolamine(in) + H(+)(in). Its function is as follows. Plays a critical role in the phospholipid salvage pathway from lysosomes to the cytosol. Mediates the rate-limiting, proton-dependent, lysosomal efflux of lysophospholipids, which can then be reacylated by acyltransferases in the endoplasmic reticulum to form phospholipids. Selective for zwitterionic headgroups such as lysophosphatidylcholine (LPC) and lysophosphatidylethanolamine (LPE), can also transport lysophosphatidylglycerol (LPG), but not other anionic lysophospholipids, sphingosine, nor sphingomyelin. Transports lysophospholipids with saturated, monounsaturated, and polyunsaturated fatty acids, such as 1-hexadecanoyl-sn-glycero-3-phosphocholine, 1-(9Z-octadecenoyl)-sn-glycero-3-phosphocholine and 1-(4Z,7Z,10Z,13Z,16Z,19Z-docosahexaenoyl)-sn-glycero-3-phosphocholine, respectively. Can also transport lysoplasmalogen (LPC with a fatty alcohol) such as 1-(1Z-hexadecenyl)-sn-glycero-3-phosphocholine. Essential player in lysosomal homeostasis. Crucial for cell survival under conditions of nutrient limitation. May be involved in necrotic or autophagic cell death. This chain is Protein spinster homolog 1 (Spns1), found in Rattus norvegicus (Rat).